A 143-amino-acid polypeptide reads, in one-letter code: Ribosome maturation factor RimP (143 aa).

Belongs to the RimP family.

The protein resides in the cytoplasm. Functionally, required for maturation of 30S ribosomal subunits. The sequence is that of Ribosome maturation factor RimP from Borrelia hermsii (strain HS1 / DAH).